Here is a 354-residue protein sequence, read N- to C-terminus: MNTRRELPDSPYLAAARGRKPARVPVWFMRQAGRSLPEYRALRARNTMMQACFDADLITEITLQPVRRHGVDAAILFSDIVVPLRASGIALDIVPDVGPVIDHPVRTAADVAAIRPLERQTVEPVEQAVRMLTAALGDVPLIGFAGAPFTLASYLVEGGPSKHHEHTKAMMLGAPDTWHALMSALTDVTIAFLQAQVDAGVDAIQVFDSWAGTLSLADYRAYVLPHSARVFQALAPAGVPMTHFGVGTAELLGAMSEAIATSGAPGVVGVDWRTSLTDAAGRVERGSALQGNLDPVVLLAGWPVVERAVRAVVEDGRRAVDAGAAGHVFNLGHGVLPATDPEIVTATVELVHSL.

Substrate contacts are provided by residues 30–34 (RQAGR), aspartate 79, tyrosine 154, serine 209, and histidine 333.

The protein belongs to the uroporphyrinogen decarboxylase family. In terms of assembly, homodimer.

The protein resides in the cytoplasm. It carries out the reaction uroporphyrinogen III + 4 H(+) = coproporphyrinogen III + 4 CO2. It participates in porphyrin-containing compound metabolism; protoporphyrin-IX biosynthesis; coproporphyrinogen-III from 5-aminolevulinate: step 4/4. Its function is as follows. Catalyzes the decarboxylation of four acetate groups of uroporphyrinogen-III to yield coproporphyrinogen-III. The chain is Uroporphyrinogen decarboxylase from Mycobacterium sp. (strain JLS).